Reading from the N-terminus, the 296-residue chain is Ribosomal RNA small subunit methyltransferase H (296 aa).

S-adenosyl-L-methionine contacts are provided by residues 38–40, E57, F88, D103, and H110; that span reads GVH.

The protein belongs to the methyltransferase superfamily. RsmH family.

Its subcellular location is the cytoplasm. The catalysed reaction is cytidine(1402) in 16S rRNA + S-adenosyl-L-methionine = N(4)-methylcytidine(1402) in 16S rRNA + S-adenosyl-L-homocysteine + H(+). Functionally, specifically methylates the N4 position of cytidine in position 1402 (C1402) of 16S rRNA. This Borreliella burgdorferi (strain ZS7) (Borrelia burgdorferi) protein is Ribosomal RNA small subunit methyltransferase H.